The primary structure comprises 538 residues: Chaperonin GroEL (538 aa).

Residues 29–32 (TIGP), 86–90 (DGTTT), glycine 413, 476–478 (NAA), and aspartate 492 each bind ATP.

This sequence belongs to the chaperonin (HSP60) family. In terms of assembly, forms a cylinder of 14 subunits composed of two heptameric rings stacked back-to-back. Interacts with the co-chaperonin GroES.

The protein localises to the cytoplasm. The enzyme catalyses ATP + H2O + a folded polypeptide = ADP + phosphate + an unfolded polypeptide.. Its function is as follows. Together with its co-chaperonin GroES, plays an essential role in assisting protein folding. The GroEL-GroES system forms a nano-cage that allows encapsulation of the non-native substrate proteins and provides a physical environment optimized to promote and accelerate protein folding. In Staphylococcus aureus (strain bovine RF122 / ET3-1), this protein is Chaperonin GroEL.